The following is a 293-amino-acid chain: Glycine betaine-binding protein OpuAC (293 aa).

A signal peptide spans 1–20 (MLKKIIGIGVSAMLALSLAA). Cys-21 carries N-palmitoyl cysteine lipidation. A lipid anchor (S-diacylglycerol cysteine) is attached at Cys-21.

In terms of assembly, the complex is composed of two ATP-binding proteins (OpuAA), two transmembrane proteins (OpuAB) and a solute-binding protein (OpuAC). Interacts with FloT.

The protein resides in the cell membrane. It is found in the membrane raft. Functionally, involved in a multicomponent binding-protein-dependent transport system for glycine betaine. This is Glycine betaine-binding protein OpuAC (opuAC) from Bacillus subtilis (strain 168).